The primary structure comprises 408 residues: MQIPSKLKPYYENIAFEQEDSKMIINLGPQHPSAHGNLRLILELDGEQVVKARPCIGYMHRGMEKMAENMIYQEFIPTTDRMDYIAASANNYAYCAAVEKLCGLEIPRRAAVIRMILLELNRITSHLLWLATHALDIGAMSVFLYCFREREYVLDLIEKYCGARLTHSSMRIGGVMLDLPENYLEEMLVFCDKFPNDLKDYEDLLDDNRIWRLRTENVGVVTKEQALNWGCTGVMLRGSGIKYDIRKEEPYLLYNEVEFGVPYATQGDSYARYKVYMQEFRESLKILRQCATLYKDTPPEILATHPEYVSASKEQILTQNYSLMQHFVLITQGLKPPKGEVYVPTESPKGELGFFIHSDGTGRPYRLKARTPSYWHCAFFEEMLVGTYLADVVAIMGNVNIVLGEIDR.

This sequence belongs to the complex I 49 kDa subunit family. NDH-1 is composed of 14 different subunits. Subunits NuoB, C, D, E, F, and G constitute the peripheral sector of the complex.

Its subcellular location is the cell inner membrane. It catalyses the reaction a quinone + NADH + 5 H(+)(in) = a quinol + NAD(+) + 4 H(+)(out). Functionally, NDH-1 shuttles electrons from NADH, via FMN and iron-sulfur (Fe-S) centers, to quinones in the respiratory chain. The immediate electron acceptor for the enzyme in this species is believed to be ubiquinone. Couples the redox reaction to proton translocation (for every two electrons transferred, four hydrogen ions are translocated across the cytoplasmic membrane), and thus conserves the redox energy in a proton gradient. The sequence is that of NADH-quinone oxidoreductase subunit D from Campylobacter jejuni subsp. doylei (strain ATCC BAA-1458 / RM4099 / 269.97).